The following is a 178-amino-acid chain: Large ribosomal subunit protein bL25 (178 aa).

This sequence belongs to the bacterial ribosomal protein bL25 family. CTC subfamily. As to quaternary structure, part of the 50S ribosomal subunit; part of the 5S rRNA/L5/L18/L25 subcomplex. Contacts the 5S rRNA. Binds to the 5S rRNA independently of L5 and L18.

Functionally, this is one of the proteins that binds to the 5S RNA in the ribosome where it forms part of the central protuberance. The chain is Large ribosomal subunit protein bL25 from Nitratiruptor sp. (strain SB155-2).